Consider the following 293-residue polypeptide: Protein Pat (293 aa).

Residues 187 to 287 (LPDIILNPLD…LLLRTRQDRA (101 aa)) form the BEN domain.

Interacts with poc1b. As to expression, an mRNA and protein component of germ plasm and primordial germ cells (PGCs) throughout oogenesis and early development, being first localized to the granulo-fibrillar material (GFM) of the mitochondrial cloud in stage I and II oocytes and to the periphery of mature germinal granules both in oocytes and in embryos. Shows some somatic expression including the ectodermal cells of tailbud embryos. In adults, only expressed in ovaries.

Its subcellular location is the cytoplasm. The protein localises to the nucleus. Probably plays a role in germ plasm formation, positioning and maintenance. This Xenopus laevis (African clawed frog) protein is Protein Pat.